The primary structure comprises 139 residues: Trafficking protein particle complex subunit 2-like protein (139 aa).

The protein belongs to the TRAPP small subunits family. Sedlin subfamily. In terms of assembly, component of the multisubunit TRAPP (transport protein particle) complex, which includes at least TRAPPC2, TRAPPC2L, TRAPPC3, TRAPPC3L, TRAPPC4, TRAPPC5, TRAPPC8, TRAPPC9, TRAPPC10, TRAPPC11 and TRAPPC12. Interacts with the heterodimer TRAPPC3-TRAPPC6A.

It localises to the cytoplasm. It is found in the perinuclear region. The protein resides in the endoplasmic reticulum. The protein localises to the golgi apparatus. May play a role in vesicular transport from endoplasmic reticulum to Golgi. The sequence is that of Trafficking protein particle complex subunit 2-like protein (TRAPPC2L) from Bos taurus (Bovine).